The following is a 204-amino-acid chain: Proteasome subunit beta type-3 (204 aa).

This sequence belongs to the peptidase T1B family. As to quaternary structure, the 26S proteasome consists of a 20S proteasome core and two 19S regulatory subunits. The 20S proteasome core is composed of 28 subunits that are arranged in four stacked rings, resulting in a barrel-shaped structure. The two end rings are each formed by seven alpha subunits, and the two central rings are each formed by seven beta subunits. The catalytic chamber with the active sites is on the inside of the barrel.

It localises to the cytoplasm. It is found in the nucleus. Non-catalytic component of the proteasome, a multicatalytic proteinase complex which is characterized by its ability to cleave peptides with Arg, Phe, Tyr, Leu, and Glu adjacent to the leaving group at neutral or slightly basic pH. The proteasome has an ATP-dependent proteolytic activity. The sequence is that of Proteasome subunit beta type-3 (PBC1) from Oryza sativa subsp. japonica (Rice).